Consider the following 189-residue polypeptide: GTPase NRas (189 aa).

GTP is bound by residues 10-18 (GAGGVGKSA) and 29-30 (VD). Residues 32 to 40 (YDPTIEDSY) carry the Effector region motif. A GTP-binding site is contributed by 57 to 61 (DTAGQ). The residue at position 89 (Ser89) is a Phosphoserine. 116-119 (NKCD) contacts GTP. A hypervariable region region spans residues 166-185 (YRMKKLNSSEDGTQGCMGLP). A Glycyl lysine isopeptide (Lys-Gly) (interchain with G-Cter in ubiquitin) cross-link involves residue Lys170. Cys181 carries the S-palmitoyl cysteine lipid modification. Residue Cys186 is the site of S-farnesyl cysteine attachment. Residues 187 to 189 (VVM) constitute a propeptide, removed in mature form.

Belongs to the small GTPase superfamily. Ras family. In terms of assembly, interacts (active GTP-bound form preferentially) with RGS14. Interacts (active GTP-bound form) with RASSF7. Interacts (active GTP-bound form) with both SHOC2 and PP1c (all isoforms) to form a tertiary complex; SHOC2 and PP1c preferably bind M-Ras/MRAS, but they also bind K-Ras/KRAS, N-Ras/NRAS and H-Ras/HRAS. In terms of processing, palmitoylated by the ZDHHC9-GOLGA7 complex. Depalmitoylated by ABHD17A, ABHD17B and ABHD17C. A continuous cycle of de- and re-palmitoylation regulates rapid exchange between plasma membrane and Golgi. Post-translationally, acetylation at Lys-104 prevents interaction with guanine nucleotide exchange factors (GEFs). Ubiquitinated by the BCR(LZTR1) E3 ubiquitin ligase complex at Lys-170 in a non-degradative manner, leading to inhibit Ras signaling by decreasing Ras association with membranes. In terms of processing, phosphorylation at Ser-89 enhances NRAS association with its downstream effectors.

It is found in the cell membrane. Its subcellular location is the golgi apparatus membrane. It catalyses the reaction GTP + H2O = GDP + phosphate + H(+). Alternates between an inactive form bound to GDP and an active form bound to GTP. Activated by a guanine nucleotide-exchange factor (GEF) and inactivated by a GTPase-activating protein (GAP). Its function is as follows. Ras proteins bind GDP/GTP and possess intrinsic GTPase activity. The chain is GTPase NRas (Nras) from Rattus norvegicus (Rat).